The sequence spans 160 residues: Major pollen allergen Bet v 1-A (160 aa).

Positions 55, 82, 84, and 101 each coordinate brassinolide.

Belongs to the BetVI family.

The protein localises to the cytoplasm. Functionally, may be a general steroid carrier protein. The polypeptide is Major pollen allergen Bet v 1-A (BETVIA) (Betula pendula (European white birch)).